Reading from the N-terminus, the 229-residue chain is uncharacterized protein (229 aa).

A disordered region spans residues 61–229; the sequence is MQAEDKVSKP…TESEDKPKRG (169 aa). Residues 109–128 show a composition bias toward basic and acidic residues; that stretch reads QQEKQQPEKAVVEQQEKQQP. Residues 166 to 194 show a composition bias toward low complexity; the sequence is QPEQPERQQQAQPERQQQAQPERQQQAQP. Positions 195–204 are enriched in acidic residues; that stretch reads EEAEDAEQEP. Residues 218–229 show a composition bias toward basic and acidic residues; the sequence is TQTESEDKPKRG.

This is an uncharacterized protein from Frog virus 3 (isolate Goorha) (FV-3).